Reading from the N-terminus, the 118-residue chain is Protein MT2260 (118 aa).

It belongs to the HesB/IscA family.

This Mycobacterium tuberculosis (strain CDC 1551 / Oshkosh) protein is Protein MT2260.